The chain runs to 230 residues: Thioredoxin domain-containing protein PLP3B (230 aa).

Residues 89–173 form the Thioredoxin domain; sequence VSEGDFLGEV…GIAMDRLVGF (85 aa). A disordered region spans residues 199 to 230; it reads EKRKEEDEEDYEYQESIRRSVRSSANVDSDSD. Residues 220 to 230 show a composition bias toward polar residues; that stretch reads RSSANVDSDSD.

Belongs to the phosducin family. Interacts with TUBB2, TUBB3, TUBB4 and TUBB5. As to expression, expressed in roots, cotyledons, leaves, stems and flowers.

It is found in the cytoplasm. It localises to the nucleus. Its function is as follows. Tubulin-binding protein involved in microtubule formation. This Arabidopsis thaliana (Mouse-ear cress) protein is Thioredoxin domain-containing protein PLP3B (PLP3B).